We begin with the raw amino-acid sequence, 299 residues long: GTPase Era (299 aa).

The Era-type G domain occupies 5-172 (KSGFVSIIGR…IDVLKTYLPE (168 aa)). The tract at residues 13–20 (GRPNVGKS) is G1. 13 to 20 (GRPNVGKS) contacts GTP. Residues 39–43 (QTTRN) form a G2 region. Residues 60-63 (DTPG) are G3. GTP is bound by residues 60–64 (DTPGI) and 122–125 (NKID). The G4 stretch occupies residues 122–125 (NKID). The tract at residues 151-153 (ISA) is G5. Positions 203-280 (TSEEIPHAIG…YLELWVKVQK (78 aa)) constitute a KH type-2 domain.

Belongs to the TRAFAC class TrmE-Era-EngA-EngB-Septin-like GTPase superfamily. Era GTPase family. Monomer.

It localises to the cytoplasm. The protein localises to the cell membrane. Its function is as follows. An essential GTPase that binds both GDP and GTP, with rapid nucleotide exchange. Plays a role in 16S rRNA processing and 30S ribosomal subunit biogenesis and possibly also in cell cycle regulation and energy metabolism. This chain is GTPase Era, found in Staphylococcus haemolyticus (strain JCSC1435).